Reading from the N-terminus, the 364-residue chain is Homeobox protein Nkx-6.1 (364 aa).

The interval 35–134 (LYPATYPPLP…SSSSSASATS (100 aa)) is disordered. Composition is skewed to low complexity over residues 48 to 92 (PSSS…LSAA) and 109 to 134 (ASGA…SATS). Residues 101–268 (LSRPSMPVAS…KYLAGPERAR (168 aa)) form a repressor domain region. Arg-189 carries the post-translational modification Asymmetric dimethylarginine. Residues 236-295 (RKHTRPTFSGQQIFALEKTFEQTKYLAGPERARLAYSLGMTESQVKVWFQNRRTKWRKKH) constitute a DNA-binding region (homeobox). Residues 294 to 364 (KHAAEMATAK…LHASEAEGSS (71 aa)) are disordered. A compositionally biased stretch (basic and acidic residues) spans 304–317 (KKQDSETERLKGTS). The segment at 306–364 (QDSETERLKGTSENEEEDDDYNKPLDPNSDDEKITQLLKKHKSSSGGLLLHASEAEGSS) is involved in DNA-binding.

Pancreatic beta cells.

The protein resides in the nucleus. Functionally, together with NKX2-2 and IRX3 acts to restrict the generation of motor neurons to the appropriate region of the neural tube. Belongs to the class II proteins of neuronal progenitor factors, which are induced by SHH signals. Transcription factor which binds to specific A/T-rich DNA sequences in the promoter regions of a number of genes. Involved in transcriptional regulation in islet beta cells. Binds to the insulin promoter and is involved in regulation of the insulin gene. The chain is Homeobox protein Nkx-6.1 (NKX6-1) from Mesocricetus auratus (Golden hamster).